The chain runs to 803 residues: Ras GTPase-activating protein 4 (803 aa).

C2 domains follow at residues 1–105 (MAKR…SGWA) and 116–232 (VQGE…EGWF). Positions 21, 27, 74, 76, 79, 82, 149, 155, 202, 204, 207, and 210 each coordinate Ca(2+). The region spanning 318–546 (GLAKDFLDLL…AQLKDFITKL (229 aa)) is the Ras-GAP domain. One can recognise a PH domain in the interval 566–673 (PPVKEGPLFI…WLSALRKVSI (108 aa)). The Btk-type zinc-finger motif lies at 675–711 (NTGLLGSYHPGVFRGDKWSCCHQKEKTGQGCDKTRSR). Zn(2+)-binding residues include H683, C694, C695, and C705. Residues 781-803 (EAHSSSPAGSPPSEPNCLLELQT) form a disordered region.

Ca(2+) serves as cofactor. Widely expressed.

The protein localises to the cytoplasm. It is found in the cytosol. Its subcellular location is the cell membrane. Its function is as follows. Ca(2+)-dependent Ras GTPase-activating protein, that switches off the Ras-MAPK pathway following a stimulus that elevates intracellular calcium. Functions as an adaptor for Cdc42 and Rac1 during FcR-mediated phagocytosis. This Homo sapiens (Human) protein is Ras GTPase-activating protein 4 (RASA4).